Consider the following 533-residue polypeptide: Beta-glucosidase 10 (533 aa).

Residues 1–23 form the signal peptide; the sequence is MAVAGAMVMSGGVLLLLLAFTCA. Q53 lines the a beta-D-glucoside pocket. N122 carries an N-linked (GlcNAc...) asparagine glycan. A beta-D-glucoside contacts are provided by residues H157 and 202–203; that span reads NE. The Proton donor role is filled by E203. A disulfide bridge links C222 with C230. Y369 provides a ligand contact to a beta-D-glucoside. N384 carries N-linked (GlcNAc...) asparagine glycosylation. Residue E440 participates in a beta-D-glucoside binding. The active-site Nucleophile is the E440. The N-linked (GlcNAc...) asparagine glycan is linked to N448. Residues W489, 496 to 497, and F505 contribute to the a beta-D-glucoside site; that span reads EW.

It belongs to the glycosyl hydrolase 1 family.

It carries out the reaction Hydrolysis of terminal, non-reducing beta-D-glucosyl residues with release of beta-D-glucose.. This Oryza sativa subsp. japonica (Rice) protein is Beta-glucosidase 10 (BGLU10).